A 199-amino-acid polypeptide reads, in one-letter code: MSDFQKSFSESTSSIKFDEKYIDTSVQPNDIGVAEQWAVKTVADPCVGNLATPVNSGYFTKAFINNLPFYREGISPNFRGLETGAAFGYLLYGPFTMTGPLRNSEFALTAGLLATIGAVHILTALFVLYNAPGKAPNVQPPDATVNNPPKDLFTRAGWADFTSGFWLGGCGGAVFAWLLVGTLHLDSIMPIIKNIWTAG.

2 consecutive transmembrane segments (helical) span residues 108–128 (LTAG…LFVL) and 165–185 (FWLG…TLHL).

It belongs to the PsaL family.

It localises to the cellular thylakoid membrane. The polypeptide is Photosystem I reaction center subunit XI (Prochlorococcus marinus (strain MIT 9301)).